A 508-amino-acid polypeptide reads, in one-letter code: Light-independent protochlorophyllide reductase subunit B (508 aa).

Residue aspartate 36 participates in [4Fe-4S] cluster binding. Residue aspartate 294 is the Proton donor of the active site. 429-430 (GM) lines the substrate pocket.

Belongs to the ChlB/BchB/BchZ family. Protochlorophyllide reductase is composed of three subunits; ChlL, ChlN and ChlB. Forms a heterotetramer of two ChlB and two ChlN subunits. [4Fe-4S] cluster is required as a cofactor.

The enzyme catalyses chlorophyllide a + oxidized 2[4Fe-4S]-[ferredoxin] + 2 ADP + 2 phosphate = protochlorophyllide a + reduced 2[4Fe-4S]-[ferredoxin] + 2 ATP + 2 H2O. Its pathway is porphyrin-containing compound metabolism; chlorophyll biosynthesis (light-independent). Its function is as follows. Component of the dark-operative protochlorophyllide reductase (DPOR) that uses Mg-ATP and reduced ferredoxin to reduce ring D of protochlorophyllide (Pchlide) to form chlorophyllide a (Chlide). This reaction is light-independent. The NB-protein (ChlN-ChlB) is the catalytic component of the complex. This chain is Light-independent protochlorophyllide reductase subunit B, found in Synechococcus elongatus (strain ATCC 33912 / PCC 7942 / FACHB-805) (Anacystis nidulans R2).